A 696-amino-acid chain; its full sequence is Elongation factor G 2 (696 aa).

Positions serine 5 to threonine 281 constitute a tr-type G domain. GTP-binding positions include alanine 14–threonine 21, aspartate 78–histidine 82, and asparagine 132–aspartate 135.

This sequence belongs to the TRAFAC class translation factor GTPase superfamily. Classic translation factor GTPase family. EF-G/EF-2 subfamily.

The protein resides in the cytoplasm. Functionally, catalyzes the GTP-dependent ribosomal translocation step during translation elongation. During this step, the ribosome changes from the pre-translocational (PRE) to the post-translocational (POST) state as the newly formed A-site-bound peptidyl-tRNA and P-site-bound deacylated tRNA move to the P and E sites, respectively. Catalyzes the coordinated movement of the two tRNA molecules, the mRNA and conformational changes in the ribosome. This chain is Elongation factor G 2, found in Vibrio parahaemolyticus serotype O3:K6 (strain RIMD 2210633).